The following is a 248-amino-acid chain: 3-deoxy-manno-octulosonate cytidylyltransferase (248 aa).

Belongs to the KdsB family.

The protein localises to the cytoplasm. It carries out the reaction 3-deoxy-alpha-D-manno-oct-2-ulosonate + CTP = CMP-3-deoxy-beta-D-manno-octulosonate + diphosphate. It participates in nucleotide-sugar biosynthesis; CMP-3-deoxy-D-manno-octulosonate biosynthesis; CMP-3-deoxy-D-manno-octulosonate from 3-deoxy-D-manno-octulosonate and CTP: step 1/1. The protein operates within bacterial outer membrane biogenesis; lipopolysaccharide biosynthesis. In terms of biological role, activates KDO (a required 8-carbon sugar) for incorporation into bacterial lipopolysaccharide in Gram-negative bacteria. The protein is 3-deoxy-manno-octulosonate cytidylyltransferase of Enterobacter sp. (strain 638).